Reading from the N-terminus, the 72-residue chain is MSKDDVIEIDGNVIEALPNATFKVELDNKHVILCHIAGKMRMHYIKIMPGDRVKVELTPYSLDKGRITYRYK.

Residues 1 to 72 (MSKDDVIEID…DKGRITYRYK (72 aa)) enclose the S1-like domain.

It belongs to the IF-1 family. As to quaternary structure, component of the 30S ribosomal translation pre-initiation complex which assembles on the 30S ribosome in the order IF-2 and IF-3, IF-1 and N-formylmethionyl-tRNA(fMet); mRNA recruitment can occur at any time during PIC assembly.

The protein localises to the cytoplasm. Functionally, one of the essential components for the initiation of protein synthesis. Stabilizes the binding of IF-2 and IF-3 on the 30S subunit to which N-formylmethionyl-tRNA(fMet) subsequently binds. Helps modulate mRNA selection, yielding the 30S pre-initiation complex (PIC). Upon addition of the 50S ribosomal subunit IF-1, IF-2 and IF-3 are released leaving the mature 70S translation initiation complex. The protein is Translation initiation factor IF-1 of Campylobacter hominis (strain ATCC BAA-381 / DSM 21671 / CCUG 45161 / LMG 19568 / NCTC 13146 / CH001A).